A 450-amino-acid polypeptide reads, in one-letter code: Bifunctional apoptosis regulator (450 aa).

Residues 1 to 20 (MEEPQKSYVNTMDLERDEPL) are disordered. Topologically, residues 1 to 140 (MEEPQKSYVN…PNTGRANQQM (140 aa)) are cytoplasmic. An RING-type zinc finger spans residues 34–74 (CHCCYDILVNPTTLNCGHSFCRHCLALWWASSKKTECPECR). Residues 141–161 (GGGFFSGVLTALTGVAVVLLV) form a helical membrane-spanning segment. Residues 162 to 331 (YHWSSRESEH…KEPTWKQWRE (170 aa)) lie on the Lumenal side of the membrane. An SAM domain is found at 182–249 (WTAEEVVLWL…LMELERVKAL (68 aa)). Residue N232 is glycosylated (N-linked (GlcNAc...) asparagine). The helical transmembrane segment at 332–352 (FLVKYSFLPYQLIAEFAWDWL) threads the bilayer. The Cytoplasmic segment spans residues 353 to 360 (EVHYWTSR). The helical transmembrane segment at 361-381 (FLIINAMLLSVLELFSFWRIW) threads the bilayer. Topologically, residues 382-404 (SRSELKTVPQRMWSHFWKVSTQG) are lumenal. Residues 405 to 425 (LFVAMFWPLIPQFVCNCLFYW) form a helical membrane-spanning segment. Residues 426–450 (ALYFNPIINIDLVVKELRRLETQVL) lie on the Cytoplasmic side of the membrane.

As to quaternary structure, interacts with CASP8, BCL2 and BCL2L1 through SAM domain and also with HIP1, IFT57, ESRRBL1 and BCAP31. Interacts with NGFR; this interaction inhibits NF-kappa-B and JNK-related signaling pathways. In terms of processing, mediates RING-dependent self-ubiquitination leading to proteasomal degradation. As to expression, expressed highly in brain, moderately in small intestine, weakly in testes and only faintly in liver and skeletal muscle. Not expressed in heart, kidney, lung and spleen.

It is found in the endoplasmic reticulum membrane. The enzyme catalyses S-ubiquitinyl-[E2 ubiquitin-conjugating enzyme]-L-cysteine + [acceptor protein]-L-lysine = [E2 ubiquitin-conjugating enzyme]-L-cysteine + N(6)-ubiquitinyl-[acceptor protein]-L-lysine.. In terms of biological role, membrane-bound E3 ubiquitin ligase that plays a role in several processes including apoptosis regulation or reticulum endoplasmic stress. Has anti-apoptotic activity, both for apoptosis triggered via death-receptors and via mitochondrial factors. Contributes to the dynamic control of IRE1/ERN1 signaling during ER stress by inducing BAX inhibitor 1/TMBIM6 proteasomal degradation. Promotes the activation of TGF-beta signaling by mediating the 'Lys-63'-linked ubiquitination of TGFBR1 which is critical to activate the pathway. Together with NGFR, negatively regulates NF-kappa-B and JNK-related signaling pathways. Promotes the proteasome-mediated degradation of PNPLA3, a protein involveld in lipid metabolism. The chain is Bifunctional apoptosis regulator (BFAR) from Homo sapiens (Human).